Consider the following 467-residue polypeptide: DEAD-box ATP-dependent RNA helicase CshA (467 aa).

A Q motif motif is present at residues 2-30; that stretch reads TTFQELGLSQEVMKAIERMGFEETTPIQA. The 171-residue stretch at 33–203 folds into the Helicase ATP-binding domain; sequence IPLSLQNKDV…ERFMNEPELV (171 aa). Residue 46 to 53 participates in ATP binding; sequence AQTGTGKT. Positions 151 to 154 match the DEAD box motif; it reads DEAD. The Helicase C-terminal domain occupies 214–374; sequence NIQQYYLEVH…RMKPPTLDEA (161 aa). Residues 428–467 are disordered; sequence TTPVQLTEEPPLAVKREKKRGGRPDGSARSRTKKRRITAH. Basic residues predominate over residues 457-467; sequence SRTKKRRITAH.

The protein belongs to the DEAD box helicase family. CshA subfamily. Oligomerizes, may be a member of the RNA degradosome.

The protein localises to the cytoplasm. It carries out the reaction ATP + H2O = ADP + phosphate + H(+). In terms of biological role, DEAD-box RNA helicase possibly involved in RNA degradation. Unwinds dsRNA in both 5'- and 3'-directions, has RNA-dependent ATPase activity. This chain is DEAD-box ATP-dependent RNA helicase CshA, found in Geobacillus kaustophilus (strain HTA426).